The chain runs to 238 residues: Dolichyldiphosphatase 1 (238 aa).

The next 4 helical transmembrane spans lie at 33-53 (LAYL…LIIF), 100-120 (PSSH…FLYL), 130-150 (FLDL…AFLV), and 162-182 (WSQV…WFIF).

Belongs to the dolichyldiphosphatase family.

The protein resides in the endoplasmic reticulum membrane. The enzyme catalyses a di-trans,poly-cis-dolichyl diphosphate + H2O = a di-trans,poly-cis-dolichyl phosphate + phosphate + H(+). It participates in protein modification; protein glycosylation. In terms of biological role, required for efficient N-glycosylation. Necessary for maintaining optimal levels of dolichol-linked oligosaccharides. Hydrolyzes dolichyl pyrophosphate at a very high rate and dolichyl monophosphate at a much lower rate. Does not act on phosphatidate. This chain is Dolichyldiphosphatase 1 (DOLPP1), found in Callithrix jacchus (White-tufted-ear marmoset).